A 312-amino-acid chain; its full sequence is Ornithine carbamoyltransferase (312 aa).

Carbamoyl phosphate is bound by residues 60–63, Q87, R111, and 138–141; these read STRT and HPCQ. Residues N169, D229, and 233 to 234 each bind L-ornithine; that span reads SM. Residues 268-269 and R296 each bind carbamoyl phosphate; that span reads CL.

This sequence belongs to the aspartate/ornithine carbamoyltransferase superfamily. OTCase family.

It localises to the cytoplasm. The catalysed reaction is carbamoyl phosphate + L-ornithine = L-citrulline + phosphate + H(+). It functions in the pathway amino-acid biosynthesis; L-arginine biosynthesis; L-arginine from L-ornithine and carbamoyl phosphate: step 1/3. Functionally, reversibly catalyzes the transfer of the carbamoyl group from carbamoyl phosphate (CP) to the N(epsilon) atom of ornithine (ORN) to produce L-citrulline. The polypeptide is Ornithine carbamoyltransferase (Rhodopseudomonas palustris (strain BisA53)).